An 80-amino-acid chain; its full sequence is Large ribosomal subunit protein bL31 (80 aa).

Zn(2+)-binding residues include C16, C18, C36, and C39.

Belongs to the bacterial ribosomal protein bL31 family. Type A subfamily. In terms of assembly, part of the 50S ribosomal subunit. Zn(2+) is required as a cofactor.

Its function is as follows. Binds the 23S rRNA. This chain is Large ribosomal subunit protein bL31, found in Methylacidiphilum infernorum (isolate V4) (Methylokorus infernorum (strain V4)).